The sequence spans 1060 residues: MPKRTDIRKIMVIGSGPIVIGQAAEFDYSGTQACLSLKEEGYQVVLVNSNPATIMTDKDIADKVYIEPITLEFVTRILRKERPDALLPTLGGQTGLNMAMALSKNGILEELNVELLGTKLSAIDKAEDRDLFKQLMEELNQPIPESEIVNSVEEAIQFAEQIGYPLIVRPAFTLGGTGGGMCDNQEQLVDITTKGLKLSPVTQCLIERSIAGFKEIEYEVMRDAADNALVVCNMENFDPVGIHTGDSIVFAPAQTLSDVENQLLRDASLDIIRALKIEGGCNVQLALDPNSFKYYVIEVNPRVSRSSALASKATGYPIAKLAAKIAVGLTLDEVINPITKTTYAMFEPALDYVVAKMPRFPFDKFESGDRKLGTQMKATGEVMAIGRNIEESLLKACRSLEIGVDHIKIADLDNVSDDVLLEKIRKAEDDRLFYLAEALRRHYSIEKLASLTSIDSFFLDKLRVIVELEDLLSKNRLDINILKKVKNKGFSDKAIASLWQINEDQVRNMRKEAGILPVYKMVDTCASEFDSATPYFYSTYAVENESLISDKASILVLGSGPIRIGQGVEFDYATVHSVKAIRESGFEAIIMNSNPETVSTDFSISDKLYFEPLTFEDVMNVIDLEKPEGVILQFGGQTAINLAKDLNKAGVKILGTQLEDLDRAENRKQFEATLQALNIPQPPGFTATTEEEAVNAAQKIGYPVLVRPSYVLGGRAMKIVENEEDLRHYMTTAVKASPDHPVLIDAYLIGKECEVDAISDGQNILIPGIMEHIERAGVHSGDSMAVYPPQTLSETIIETIVDYTKRLAIGLNCIGMMNIQFVIKDQKVYVIEVNPRASRTLPFLSKVTHIPMAQVATKVILGDKLCNFTYGYDLYPASDMVHIKAPAFSFTKLAKVDSLLGPEMKSTGEVMGSDINLQKALYKAFEAAYLHMPDYGNIVFTVDDTDKEEALELAKVYQSIGYRIYATQGTAIYFDANGLETVLVGKLGENDRNHIPDLIKNGKIQAVINTVGQNNIDNHDALIIRRSAIEQGVPLFTSLDTAHAMFKVLESRAFTLKVLD.

The carboxyphosphate synthetic domain stretch occupies residues 1–401; sequence MPKRTDIRKI…SLLKACRSLE (401 aa). 12 residues coordinate ATP: Arg-129, Arg-169, Gly-175, Gly-176, Arg-208, Ile-210, Glu-215, Gly-241, Ile-242, His-243, Gln-284, and Glu-298. Residues 133–327 enclose the ATP-grasp 1 domain; it reads KQLMEELNQP…IAKLAAKIAV (195 aa). Mg(2+) is bound by residues Gln-284, Glu-298, and Asn-300. Gln-284, Glu-298, and Asn-300 together coordinate Mn(2+). The oligomerization domain stretch occupies residues 402–546; the sequence is IGVDHIKIAD…YSTYAVENES (145 aa). The interval 547-929 is carbamoyl phosphate synthetic domain; it reads LISDKASILV…ALYKAFEAAY (383 aa). The region spanning 671–861 is the ATP-grasp 2 domain; the sequence is EATLQALNIP…MAQVATKVIL (191 aa). The ATP site is built by Arg-707, Ala-746, Leu-748, Glu-752, Gly-777, Val-778, His-779, Ser-780, Gln-820, and Glu-832. Mg(2+) contacts are provided by Gln-820, Glu-832, and Asn-834. Positions 820, 832, and 834 each coordinate Mn(2+). One can recognise an MGS-like domain in the interval 930–1060; that stretch reads LHMPDYGNIV…SRAFTLKVLD (131 aa). Positions 930-1060 are allosteric domain; that stretch reads LHMPDYGNIV…SRAFTLKVLD (131 aa).

The protein belongs to the CarB family. Composed of two chains; the small (or glutamine) chain promotes the hydrolysis of glutamine to ammonia, which is used by the large (or ammonia) chain to synthesize carbamoyl phosphate. Tetramer of heterodimers (alpha,beta)4. It depends on Mg(2+) as a cofactor. Requires Mn(2+) as cofactor.

The catalysed reaction is hydrogencarbonate + L-glutamine + 2 ATP + H2O = carbamoyl phosphate + L-glutamate + 2 ADP + phosphate + 2 H(+). It catalyses the reaction hydrogencarbonate + NH4(+) + 2 ATP = carbamoyl phosphate + 2 ADP + phosphate + 2 H(+). Its pathway is amino-acid biosynthesis; L-arginine biosynthesis; carbamoyl phosphate from bicarbonate: step 1/1. The protein operates within pyrimidine metabolism; UMP biosynthesis via de novo pathway; (S)-dihydroorotate from bicarbonate: step 1/3. In terms of biological role, large subunit of the glutamine-dependent carbamoyl phosphate synthetase (CPSase). CPSase catalyzes the formation of carbamoyl phosphate from the ammonia moiety of glutamine, carbonate, and phosphate donated by ATP, constituting the first step of 2 biosynthetic pathways, one leading to arginine and/or urea and the other to pyrimidine nucleotides. The large subunit (synthetase) binds the substrates ammonia (free or transferred from glutamine from the small subunit), hydrogencarbonate and ATP and carries out an ATP-coupled ligase reaction, activating hydrogencarbonate by forming carboxy phosphate which reacts with ammonia to form carbamoyl phosphate. This chain is Carbamoyl phosphate synthase large chain, found in Streptococcus agalactiae serotype III (strain NEM316).